Consider the following 390-residue polypeptide: 1-deoxy-D-xylulose 5-phosphate reductoisomerase (390 aa).

Residues threonine 10, glycine 11, serine 12, isoleucine 13, glycine 36, arginine 37, asparagine 38, and asparagine 121 each contribute to the NADPH site. Lysine 122 provides a ligand contact to 1-deoxy-D-xylulose 5-phosphate. An NADPH-binding site is contributed by glutamate 123. Aspartate 147 contributes to the Mn(2+) binding site. Positions 148, 149, 173, and 196 each coordinate 1-deoxy-D-xylulose 5-phosphate. Mn(2+) is bound at residue glutamate 149. Glycine 202 is an NADPH binding site. Residues serine 209, asparagine 214, lysine 215, and glutamate 218 each coordinate 1-deoxy-D-xylulose 5-phosphate. Position 218 (glutamate 218) interacts with Mn(2+). Residues 367-390 (AASEHGRREAEKRVGARAHAPASR) form a disordered region. Positions 370 to 380 (EHGRREAEKRV) are enriched in basic and acidic residues.

This sequence belongs to the DXR family. It depends on Mg(2+) as a cofactor. Mn(2+) serves as cofactor.

The catalysed reaction is 2-C-methyl-D-erythritol 4-phosphate + NADP(+) = 1-deoxy-D-xylulose 5-phosphate + NADPH + H(+). It functions in the pathway isoprenoid biosynthesis; isopentenyl diphosphate biosynthesis via DXP pathway; isopentenyl diphosphate from 1-deoxy-D-xylulose 5-phosphate: step 1/6. Its function is as follows. Catalyzes the NADPH-dependent rearrangement and reduction of 1-deoxy-D-xylulose-5-phosphate (DXP) to 2-C-methyl-D-erythritol 4-phosphate (MEP). This chain is 1-deoxy-D-xylulose 5-phosphate reductoisomerase, found in Anaeromyxobacter dehalogenans (strain 2CP-1 / ATCC BAA-258).